Here is a 463-residue protein sequence, read N- to C-terminus: Quinolone resistance protein NorB (463 aa).

The next 14 membrane-spanning stretches (helical) occupy residues 17-37 (IGIVLSVITFWLFAQSLVNVV), 53-73 (IAVSITALFSGMFVVGAGGLA), 86-106 (IILNILGSLLIIISNIPLLLI), 107-127 (IGRLIQGLSAACIMPATLSII), 142-162 (YWSIGSWGGSGVCSFFGGAVA), 165-185 (LGWRWIFILSIIISLIALFLI), 201-221 (FDIKGLVLLVIMLLTLNILIT), 230-250 (SLLFITLLAIAIGSFSLFIVL), 273-293 (TASNFLLNGVAGTLIVANTFV), 299-319 (YSSLQAGSLSITYLVMVLIMI), 334-354 (PMLIGTGVLIVGECLISLTFL), 357-377 (ILYVICCIIGYLFFGLGLGIY), 403-423 (MASALGGAFGVALSGAVYAIV), and 435-455 (IALWLNAGMGILSFVIILLLV).

It belongs to the major facilitator superfamily. TCR/Tet family.

The protein localises to the cell membrane. Multidrug efflux pump that acts independently of NorA and is one of the factors that confers resistance against diverse quinolones and chemical compounds. The chain is Quinolone resistance protein NorB (norB) from Staphylococcus aureus (strain Mu3 / ATCC 700698).